Here is a 337-residue protein sequence, read N- to C-terminus: Anthranilate phosphoribosyltransferase (337 aa).

5-phospho-alpha-D-ribose 1-diphosphate is bound by residues glycine 81, 84 to 85 (GD), serine 89, 91 to 94 (NVST), 109 to 117 (KHGNRALSS), and alanine 121. Glycine 81 contacts anthranilate. Serine 93 contacts Mg(2+). Anthranilate is bound at residue asparagine 112. Arginine 167 lines the anthranilate pocket. Mg(2+) is bound by residues aspartate 226 and glutamate 227.

This sequence belongs to the anthranilate phosphoribosyltransferase family. In terms of assembly, homodimer. Requires Mg(2+) as cofactor.

It carries out the reaction N-(5-phospho-beta-D-ribosyl)anthranilate + diphosphate = 5-phospho-alpha-D-ribose 1-diphosphate + anthranilate. Its pathway is amino-acid biosynthesis; L-tryptophan biosynthesis; L-tryptophan from chorismate: step 2/5. Functionally, catalyzes the transfer of the phosphoribosyl group of 5-phosphorylribose-1-pyrophosphate (PRPP) to anthranilate to yield N-(5'-phosphoribosyl)-anthranilate (PRA). This chain is Anthranilate phosphoribosyltransferase, found in Nitrobacter hamburgensis (strain DSM 10229 / NCIMB 13809 / X14).